The sequence spans 311 residues: Malate dehydrogenase (311 aa).

Residues 7–13 (GAAGGIG) and aspartate 34 contribute to the NAD(+) site. Arginine 81 and arginine 87 together coordinate substrate. NAD(+) is bound by residues asparagine 94 and 117 to 119 (ITN). Asparagine 119 and arginine 153 together coordinate substrate. The Proton acceptor role is filled by histidine 177. Position 227 (methionine 227) interacts with NAD(+).

This sequence belongs to the LDH/MDH superfamily. MDH type 1 family. As to quaternary structure, homodimer.

It catalyses the reaction (S)-malate + NAD(+) = oxaloacetate + NADH + H(+). Its function is as follows. Catalyzes the reversible oxidation of malate to oxaloacetate. The polypeptide is Malate dehydrogenase (Shewanella frigidimarina (strain NCIMB 400)).